Reading from the N-terminus, the 801-residue chain is MLVSYKWLKELVDIDVTPAALAEKMSTTGIEVEGIEVPAEGLSKLVVGHVLSCEDVPETHLHLCQVDTGDETPRQIVCGAPNVKAGIKVIVAVPGARIADNYKIKKGKIRGMESLGMICSLQELGLSDSIIPKEFSDGIQILPEEAVPGDAIFKYLDLDDHIIELSITPNRADALSMRGVAHEVAAIYGKSVSFPQKNLQESDKATSEAIEVAIASDKVLTYASRVVENVKVKPSPQWLQNLLMNAGIRPINNVVDVTNYVLLYFGQPMHAFDYDKFEDHKIVARAARQGESLVTLDGEKRDLTTEDLVITVADKPVALAGVMGGQATEIDGNSQTVVLEAAVFDGKSIRKTSGRLNLRSESSSRFEKGVNYATVLEALDFAAAMLQELAEGQVLSGHVQAGQLPTEPVEVSTSLDYVNVRLGTELTFADIQRIFDQLGFGLTGDETRFTVAVPRRRWDISIPADLVEEIARIYGYDKLPTTLPEAGGTAAELTPTQALRRKVRGLAEGLGLTEIISYALTTPEKAIEFAVAPSHLTELMWPMSVERSALRQNMVSGMLDTVAYNVARKQSNLALYEIGKIFEQEVNPKEDLPNEVNHFAFAICGLVAQKDFQTQAQAVDFYHAKGILDTLFANLNLKVQYVPTKDLANMHPGRTALILLDEQVIGFVGQVHPGTAKAYSIPETYVAELDMAALEAALPSDQTFAEITKFPAMTRDIALLLDREVSHQAIVTAIESAGVKRLTSIKLFDVYEGATIQAGKKSMAYSLTFQNPNDNLTDEEVAKYMEKITKSLTEQVGAEVR.

The tRNA-binding domain occupies 39–153 (AEGLSKLVVG…EEAVPGDAIF (115 aa)). The 76-residue stretch at 406 to 481 (TEPVEVSTSL…RIYGYDKLPT (76 aa)) folds into the B5 domain. Aspartate 459, aspartate 465, glutamate 468, and glutamate 469 together coordinate Mg(2+). In terms of domain architecture, FDX-ACB spans 708–801 (TKFPAMTRDI…LTEQVGAEVR (94 aa)).

It belongs to the phenylalanyl-tRNA synthetase beta subunit family. Type 1 subfamily. In terms of assembly, tetramer of two alpha and two beta subunits. Mg(2+) serves as cofactor.

The protein resides in the cytoplasm. The enzyme catalyses tRNA(Phe) + L-phenylalanine + ATP = L-phenylalanyl-tRNA(Phe) + AMP + diphosphate + H(+). The polypeptide is Phenylalanine--tRNA ligase beta subunit (Streptococcus pyogenes serotype M18 (strain MGAS8232)).